The sequence spans 294 residues: MRPSLDSYAHLAGGKVRDLYTIDDEHLLLVASDRISAYDHVLSTPIPDKGRVLTAMSVFFFGVLGGNNHLAGEPDDSRIPEEVLGRALVVRKLNMVPVECVARGYLTGSGLIDYNETGAVCGVALPEGLVEASQLPDPIFTPARKAELGEHDENISFEAVVEKVGQDLAVKLRDDTLDVYGRASNFAADRGIILADTKLEFGLDAQNNLILADEVLTPDSSRYWPADGYEAGKVQPSFDKQFVRNWLTGPESGWDRASDTPPPPLPAEIVEATRARYIEAYERISGLSFADWVG.

It belongs to the SAICAR synthetase family.

The catalysed reaction is 5-amino-1-(5-phospho-D-ribosyl)imidazole-4-carboxylate + L-aspartate + ATP = (2S)-2-[5-amino-1-(5-phospho-beta-D-ribosyl)imidazole-4-carboxamido]succinate + ADP + phosphate + 2 H(+). The protein operates within purine metabolism; IMP biosynthesis via de novo pathway; 5-amino-1-(5-phospho-D-ribosyl)imidazole-4-carboxamide from 5-amino-1-(5-phospho-D-ribosyl)imidazole-4-carboxylate: step 1/2. The polypeptide is Phosphoribosylaminoimidazole-succinocarboxamide synthase (Rhodococcus opacus (strain B4)).